A 220-amino-acid polypeptide reads, in one-letter code: Glutathione S-transferase 2 (220 aa).

In terms of domain architecture, GST N-terminal spans 2–88; that stretch reads VVTLGYWDIR…YIARKHNMCG (87 aa). Residues 7–8, 43–46, lysine 50, 59–60, and 72–73 each bind glutathione; these read YW, PSDW, NL, and QS. The GST C-terminal domain maps to 90–208; sequence TEVEKQRVDV…RSGRFMKAPI (119 aa). Tyrosine 116 provides a ligand contact to substrate.

This sequence belongs to the GST superfamily. Mu family. Homodimer.

Its subcellular location is the cytoplasm. The catalysed reaction is RX + glutathione = an S-substituted glutathione + a halide anion + H(+). Conjugation of reduced glutathione to a wide number of exogenous and endogenous hydrophobic electrophiles. Participates in the formation of novel hepoxilin regioisomers. This Gallus gallus (Chicken) protein is Glutathione S-transferase 2 (GSTM2).